Reading from the N-terminus, the 392-residue chain is Succinyl-diaminopimelate desuccinylase (392 aa).

H76 is a binding site for Zn(2+). D78 is a catalytic residue. D107 is a binding site for Zn(2+). Catalysis depends on E143, which acts as the Proton acceptor. Zn(2+) is bound by residues E144, E172, and H357.

It belongs to the peptidase M20A family. DapE subfamily. Homodimer. Zn(2+) serves as cofactor. The cofactor is Co(2+).

It catalyses the reaction N-succinyl-(2S,6S)-2,6-diaminopimelate + H2O = (2S,6S)-2,6-diaminopimelate + succinate. The protein operates within amino-acid biosynthesis; L-lysine biosynthesis via DAP pathway; LL-2,6-diaminopimelate from (S)-tetrahydrodipicolinate (succinylase route): step 3/3. Its function is as follows. Catalyzes the hydrolysis of N-succinyl-L,L-diaminopimelic acid (SDAP), forming succinate and LL-2,6-diaminopimelate (DAP), an intermediate involved in the bacterial biosynthesis of lysine and meso-diaminopimelic acid, an essential component of bacterial cell walls. The protein is Succinyl-diaminopimelate desuccinylase of Helicobacter hepaticus (strain ATCC 51449 / 3B1).